The primary structure comprises 188 residues: Elongation factor P (188 aa).

This sequence belongs to the elongation factor P family.

It localises to the cytoplasm. The protein operates within protein biosynthesis; polypeptide chain elongation. Its function is as follows. Involved in peptide bond synthesis. Stimulates efficient translation and peptide-bond synthesis on native or reconstituted 70S ribosomes in vitro. Probably functions indirectly by altering the affinity of the ribosome for aminoacyl-tRNA, thus increasing their reactivity as acceptors for peptidyl transferase. This Rickettsia africae (strain ESF-5) protein is Elongation factor P.